The sequence spans 857 residues: Protein STICHEL-like 2 (857 aa).

Position 280 to 287 (280 to 287 (GPRGTGKT)) interacts with ATP. Residues Cys-299, Cys-309, Cys-312, and Cys-315 each contribute to the Zn(2+) site. Residues 544–576 (LTRHTSEEEMQKLRNALKILSDAEKHLRASKNQ) are a coiled coil. 2 disordered regions span residues 593 to 629 (SSFA…DAEK) and 787 to 845 (ASSR…SSRL). Over residues 599–610 (ENGRNQINKDVE) the composition is skewed to basic and acidic residues. Residues 834–843 (QSETQNSKSS) show a composition bias toward polar residues.

Belongs to the DnaX/STICHEL family.

The sequence is that of Protein STICHEL-like 2 from Arabidopsis thaliana (Mouse-ear cress).